The primary structure comprises 1147 residues: GPI inositol-deacylase (1147 aa).

The interval Met-1–Leu-94 is disordered. Asn-23 carries N-linked (GlcNAc...) asparagine glycosylation. A compositionally biased stretch (basic and acidic residues) spans Ser-28–Asp-49. The span at Arg-50–Ile-63 shows a compositional bias: low complexity. An N-linked (GlcNAc...) asparagine glycan is attached at Asn-74. The chain crosses the membrane as a helical span at residues Ala-127–Leu-147. The active site involves Ser-310. Transmembrane regions (helical) follow at residues Leu-795–Leu-815 and Ile-843–Ala-863. Residues Asn-865 and Asn-873 are each glycosylated (N-linked (GlcNAc...) asparagine). 3 helical membrane-spanning segments follow: residues Pro-893–Phe-913, Leu-918–Ile-938, and Val-965–Leu-985. Residue Asn-1011 is glycosylated (N-linked (GlcNAc...) asparagine). The next 3 membrane-spanning stretches (helical) occupy residues Ser-1015–Val-1035, Val-1052–Pro-1072, and Leu-1084–Leu-1104.

This sequence belongs to the GPI inositol-deacylase family.

It is found in the endoplasmic reticulum membrane. Its function is as follows. Involved in inositol deacylation of GPI-anchored proteins which plays important roles in the quality control and ER-associated degradation of GPI-anchored proteins. In Chaetomium globosum (strain ATCC 6205 / CBS 148.51 / DSM 1962 / NBRC 6347 / NRRL 1970) (Soil fungus), this protein is GPI inositol-deacylase (BST1).